The following is a 548-amino-acid chain: ATP synthase subunit alpha (548 aa).

172–179 (GDRKTGKT) is an ATP binding site. Residues 526–548 (AEAMDEADVEKESVKVRKPAPKK) form a disordered region.

This sequence belongs to the ATPase alpha/beta chains family. In terms of assembly, F-type ATPases have 2 components, CF(1) - the catalytic core - and CF(0) - the membrane proton channel. CF(1) has five subunits: alpha(3), beta(3), gamma(1), delta(1), epsilon(1). CF(0) has three main subunits: a(1), b(2) and c(9-12). The alpha and beta chains form an alternating ring which encloses part of the gamma chain. CF(1) is attached to CF(0) by a central stalk formed by the gamma and epsilon chains, while a peripheral stalk is formed by the delta and b chains.

It localises to the cell membrane. It catalyses the reaction ATP + H2O + 4 H(+)(in) = ADP + phosphate + 5 H(+)(out). In terms of biological role, produces ATP from ADP in the presence of a proton gradient across the membrane. The alpha chain is a regulatory subunit. The sequence is that of ATP synthase subunit alpha from Mycolicibacterium gilvum (strain PYR-GCK) (Mycobacterium gilvum (strain PYR-GCK)).